The chain runs to 607 residues: Fatty acid amide hydrolase (607 aa).

Residues Lys204 and Ser280 each act as charge relay system in the active site. Substrate is bound at residue Gly301 to Ser304. The active-site Acyl-ester intermediate is the Ser304.

The protein belongs to the amidase family. In terms of assembly, forms homodimers.

It is found in the endoplasmic reticulum membrane. It localises to the cell membrane. It carries out the reaction N-(9Z,12Z-octadecadienoyl)-ethanolamine + H2O = ethanolamine + (9Z,12Z)-octadecadienoate. Functionally, catalyzes the hydrolysis of bioactive endogenous fatty acid amides to their corresponding acids. The hydrolysis of endogenous amidated lipids terminates their participation as lipid mediators in various signaling systems. Converts a wide range of N-acylethanolamines (NAEs) to their corresponding free fatty acids and ethanolamine. The sequence is that of Fatty acid amide hydrolase from Medicago truncatula (Barrel medic).